A 1314-amino-acid chain; its full sequence is AT-rich interactive domain-containing protein 4B (1314 aa).

2 disordered regions span residues 123-169 (LPLT…RKQT) and 266-306 (KTEL…EPFP). A phosphoserine mark is found at Ser276, Ser295, and Ser296. The span at 277–305 (EAEEEEEEEDDEKEKEDNSSEEEEEIEPF) shows a compositional bias: acidic residues. The ARID domain occupies 306 to 398 (PEERENFLQQ…YLYGFEEYCR (93 aa)). Residues Lys428 and Lys461 each participate in a glycyl lysine isopeptide (Lys-Gly) (interchain with G-Cter in SUMO2) cross-link. Positions 439–464 (NVEDSKNVMPKEETPAEDESERKENI) are enriched in basic and acidic residues. Disordered regions lie at residues 439–577 (NVED…KVQV), 635–678 (IKHR…SPEM), 709–888 (ASES…EEKR), 943–1215 (KELF…RLPK), and 1256–1290 (VASI…SITA). At Ser482 the chain carries Phosphoserine. The span at 486–511 (KEAHITKLEENENLEDKDGGRARTEE) shows a compositional bias: basic and acidic residues. The segment covering 531–567 (NKEEDEDDEEIEEEEEEDEEEDEDEDDDDNNEEEEFE) has biased composition (acidic residues). Positions 572–624 (GMKVQVRYGRGKNQKMYEASIKDSDVEGGEALYLVHYCGWNVRYDEWIKADKI) constitute a Tudor-knot domain. Basic and acidic residues predominate over residues 643–656 (NKLDKEKDRDEKYS). Phosphoserine occurs at positions 666, 668, 675, and 717. Composition is skewed to basic and acidic residues over residues 722-754 (ERCT…KEEQ) and 778-787 (SPERLRKDME). Residue Lys751 forms a Glycyl lysine isopeptide (Lys-Gly) (interchain with G-Cter in SUMO2) linkage. Ser778 and Ser790 each carry phosphoserine. Over residues 788–800 (AISEDTDFEEEDE) the composition is skewed to acidic residues. Phosphothreonine is present on Thr793. Composition is skewed to basic and acidic residues over residues 808–817 (VKKDTTDKAL), 841–853 (GKKE…KEPL), and 997–1012 (KPIE…RKTE). Positions 1013–1023 (FPSSGSNSVLN) are enriched in polar residues. Ser1016 is modified (phosphoserine). Phosphothreonine is present on Thr1028. The span at 1030–1051 (ESPSSVTITEASQQQSSVTVSV) shows a compositional bias: low complexity. Residue Ser1031 is modified to Phosphoserine. Positions 1058 to 1067 (EEVRSIKSET) are enriched in basic and acidic residues. Positions 1089-1103 (SSPAGFDASVSSSSS) are enriched in low complexity. A compositionally biased stretch (basic residues) spans 1132-1150 (KKQKRSHKATVVNNKKKGK). At Thr1152 the chain carries Phosphothreonine. Residues Ser1154, Ser1155, Ser1157, and Ser1161 each carry the phosphoserine modification. A compositionally biased stretch (polar residues) spans 1164–1186 (ESVTKTQTIKSVPTGMKTHNSKS). The span at 1198–1210 (RNGDKDPDLKEPS) shows a compositional bias: basic and acidic residues. Residues 1227 to 1272 (ENMTSAERISILQEKLQEIRKHYLSLKSEVASIDRRRKRLKKKERE) are a coiled coil. The segment covering 1274-1290 (AATSSSSSSPSSSSITA) has biased composition (low complexity).

Component of a Sin3A corepressor complex consisting of SIN3A, SAP130, SUDS3/SAP45, SAP180, HDAC1 and HDAC2. Interacts with ARID4A. Interacts with AR. As to expression, expressed in Sertoli cells of the testis.

It localises to the nucleus. Functionally, acts as a transcriptional repressor. May function in the assembly and/or enzymatic activity of the Sin3A corepressor complex or in mediating interactions between the complex and other regulatory complexes. Plays a role in the regulation of epigenetic modifications at the PWS/AS imprinting center near the SNRPN promoter, where it might function as part of a complex with RB1 and ARID4A. Involved in spermatogenesis, together with ARID4A, where it functions as a transcriptional coactivator for AR (androgen receptor) and enhances expression of genes required for sperm maturation. Regulates expression of the tight junction protein CLDN3 in the testis, which is important for integrity of the blood-testis barrier. Plays a role in myeloid homeostasis where it regulates the histone methylation state of bone marrow cells and expression of various genes involved in hematopoiesis. May function as a leukemia suppressor. This is AT-rich interactive domain-containing protein 4B (Arid4b) from Mus musculus (Mouse).